Consider the following 1412-residue polypeptide: MKALLDLFKQVQQPEVFDAIKIGLASPDKIRSWSFGEVKKPETINYRTFKPERDGLFCAKIFGPIKDYECLCGKYKRLKHRGVICEKCGVEVTLAKVRRERMGHIELASPVAHIWFLKSLPSRLGMVLDMTLRDIERVLYFEAYVVIDPGMTPLKARQIMTEEDYYNKVEEYGDEFRAEMGAEGVRELLRAINIDEQVEMLRTELKNTGSEAKIKKYAKRLKVLEAFQRSGIKPDWMVLEVLPVLPPELRPLVPLDGGRFATSDLNDLYRRVINRNNRLKRLLELKAPEIIVRNEKRMLQEAVDSLLDNGRRGKAMTGANKRPLKSLADMIKGKGGRFRQNLLGKRVDYSGRSVIVVGPTLKLHQCGLPKLMALELFKPFIFNKLEVMGVATTIKAAKKEVENQTPVVWDILEEVIREHPVMLNRAPTLHRLGIQAFEPVLIEGKAIQLHPLVCAAFNADFDGDQMAVHVPLSLEAQMEARTLMLASNNVLFPANGDPSIVPSQDIVLGLYYATREAVNAKGEGLTFTGVSEALRAYENKEVELASRVNVRITEMVHNEDKSEGAPAFVPKITLYPTTVGRAILSEILPPGLPFSVLNKPLKKKEISRLINTAFRKCGLRETVIFADQLMQSGFRLATRAGISICVDDMLVPPQKETIVGDAAKKVKEYDRQYMSGLVTSQERYNNVVDIWSATSEAVGKAMMEQLSTEPVTDRDGNETRQESFNSIYMMADSGARGSAVQIRQLAGMRGLMAKPDGSIIETPITANFREGLNVLQYFISTHGARKGLADTALKTANSGYLTRRLVDVTQDLVVVEDDCGTSNGVAMKALVEGGEVVEALRDRILGRVTVADVVNPESQETLYETGTLLDEDAVEEIERLGIDEVRVRTPLTCETRYGLCAACYGRDLGRGSSVNVGEAVGVIAAQSIGEPGTQLTMRTFHIGGAASRAAVASSVEAKSNGTVRFTATMRYVTNAKGEQIVISRSGEAMITDDHGRERERHKVPYGATLLQLDGAQIKAGTQLATWDPMTRPIITEWGGTVKFENVEEGVTVAKQIDDVTGLSTLVVIDVKRRGSQASKTVRPQVKLLDANGEEVKIPNTEHSVQIGFQVGALITVKDGQQVQVGEVLARIPVESQKTRDITGGLPRVAELFEARSPKDAGILAEVTGTTSFGKDTKGKQRLVITDLDGNQHEFLIAKEKQVLVHDGQVVNKGEMIVDGPADPHDILRLQGIEALSRYIVDEVQDVYRLQGVKINDKHIEVIVRQMLRRVQITDNGDTRFIPGEQVERSDMLDENDRMIAEDKRPATYENVLLGITKASLSTDSFISAASFQETTRVLTEAAIMGKRDDLRGLKENVIVGRLIPAGTGLAFHKARKSKELSDRERFDQIAAEESFEFGTPETPAAEQQHSGE.

4 residues coordinate Zn(2+): Cys-70, Cys-72, Cys-85, and Cys-88. Mg(2+) is bound by residues Asp-460, Asp-462, and Asp-464. Positions 819, 893, 900, and 903 each coordinate Zn(2+). Residues 1391-1412 are disordered; that stretch reads AEESFEFGTPETPAAEQQHSGE.

Belongs to the RNA polymerase beta' chain family. As to quaternary structure, the RNAP catalytic core consists of 2 alpha, 1 beta, 1 beta' and 1 omega subunit. When a sigma factor is associated with the core the holoenzyme is formed, which can initiate transcription. The cofactor is Mg(2+). Requires Zn(2+) as cofactor.

It carries out the reaction RNA(n) + a ribonucleoside 5'-triphosphate = RNA(n+1) + diphosphate. Functionally, DNA-dependent RNA polymerase catalyzes the transcription of DNA into RNA using the four ribonucleoside triphosphates as substrates. The polypeptide is DNA-directed RNA polymerase subunit beta' (Paraburkholderia phytofirmans (strain DSM 17436 / LMG 22146 / PsJN) (Burkholderia phytofirmans)).